Here is a 479-residue protein sequence, read N- to C-terminus: Glutamate--tRNA ligase (479 aa).

The 'HIGH' region motif lies at 21-31 (PSPTGYLHVGG). The short motif at 248–252 (KLSKR) is the 'KMSKS' region element. K251 is an ATP binding site.

This sequence belongs to the class-I aminoacyl-tRNA synthetase family. Glutamate--tRNA ligase type 1 subfamily. In terms of assembly, monomer.

The protein localises to the cytoplasm. It carries out the reaction tRNA(Glu) + L-glutamate + ATP = L-glutamyl-tRNA(Glu) + AMP + diphosphate. Its function is as follows. Catalyzes the attachment of glutamate to tRNA(Glu) in a two-step reaction: glutamate is first activated by ATP to form Glu-AMP and then transferred to the acceptor end of tRNA(Glu). The protein is Glutamate--tRNA ligase of Actinobacillus pleuropneumoniae serotype 7 (strain AP76).